Consider the following 529-residue polypeptide: MDIDGVDDDLHILDPELLQLPGLSPSPLKPTSLIADDLFSQWLSLPETATLVKSLIDDAKSGTPTNKSKNLPSVFLSSSTPPLSPRSSSGSPRFSRQRTSPPSLHSPLRSLKEPKRQLIPQFYYQHGRPPAKELKEQCLSMVDQVFSNYIDGLHVDEFKSITKQVCKLPSFLSPALFRKIDPNCTDIVTRDAFIKYWIDGNMLTMDTASQIYNILRQQGCSYLRQADFKPVLDELLATHPGLEFLRTISEFQERYAETVIYRIFYYINRSGTGCLTLRELRRGNLIAAMQQLDEEDDINKIIRYFSYEHFYVIYCKFWELDGDHDCFIDKDNLIKYGNNALTYRIVDRIFSQIPRKFTSKVEGKMSYEDFVYFILAEEDKSSEPSLEYWFKCVDLDGNGVITSNEMQFFFEEQLHRMECITQEAVLFSDILCQIIDMIGPEKENCITLQDLKGSKLSANVFNILFNLNKFMAFETRDPFLIRQEREDPNLTEWDRFAQREYARLSMEEDVDEVSNGSADVWDEPLEPPF.

The tract at residues 60–110 is disordered; it reads KSGTPTNKSKNLPSVFLSSSTPPLSPRSSSGSPRFSRQRTSPPSLHSPLRS. A compositionally biased stretch (low complexity) spans 71–109; sequence LPSVFLSSSTPPLSPRSSSGSPRFSRQRTSPPSLHSPLR. The EF-hand domain maps to 381-416; sequence SSEPSLEYWFKCVDLDGNGVITSNEMQFFFEEQLHR. Ca(2+) contacts are provided by Asp394, Asp396, Asn398, and Glu405. A disordered region spans residues 507-529; the sequence is EEDVDEVSNGSADVWDEPLEPPF. Over residues 520–529 the composition is skewed to acidic residues; that stretch reads VWDEPLEPPF.

PP2A consists of a common heterodimeric core enzyme, composed of a 36 kDa catalytic subunit (subunit C) and a 65 kDa constant regulatory subunit (PR65 or subunit A), that associates with a variety of regulatory subunits. Proteins that associate with the core dimer include three families of regulatory subunits B (the R2/B/PR55/B55, R3/B''/PR72/PR130/PR59 and R5/B'/B56 families) and cell signaling molecules.

In terms of biological role, probable regulatory subunit of type 2A protein phosphatase. This is Probable serine/threonine protein phosphatase 2A regulatory subunit B''epsilon (B''EPSILON) from Arabidopsis thaliana (Mouse-ear cress).